The sequence spans 319 residues: Protein-methionine-sulfoxide reductase catalytic subunit MsrP (319 aa).

The segment at residues Met1 to Ala40 is a signal peptide (tat-type signal). Mo-molybdopterin contacts are provided by residues Asn73, Tyr76 to Glu77, Cys131, Thr166, Asn218, Arg223, and Asn234 to Lys236.

Belongs to the MsrP family. In terms of assembly, heterodimer of a catalytic subunit (MsrP) and a heme-binding subunit (MsrQ). Mo-molybdopterin serves as cofactor. Predicted to be exported by the Tat system. The position of the signal peptide cleavage has not been experimentally proven.

The protein resides in the periplasm. It carries out the reaction L-methionyl-[protein] + a quinone + H2O = L-methionyl-(S)-S-oxide-[protein] + a quinol. It catalyses the reaction L-methionyl-[protein] + a quinone + H2O = L-methionyl-(R)-S-oxide-[protein] + a quinol. Its function is as follows. Part of the MsrPQ system that repairs oxidized periplasmic proteins containing methionine sulfoxide residues (Met-O), using respiratory chain electrons. Thus protects these proteins from oxidative-stress damage caused by reactive species of oxygen and chlorine generated by the host defense mechanisms. MsrPQ is essential for the maintenance of envelope integrity under bleach stress, rescuing a wide series of structurally unrelated periplasmic proteins from methionine oxidation. The catalytic subunit MsrP is non-stereospecific, being able to reduce both (R-) and (S-) diastereoisomers of methionine sulfoxide. The polypeptide is Protein-methionine-sulfoxide reductase catalytic subunit MsrP (Pasteurella multocida (strain Pm70)).